A 664-amino-acid chain; its full sequence is 1,4-alpha-glucan branching enzyme GlgB 2 (664 aa).

Basic and acidic residues predominate over residues 1 to 17 (MGGKEMRNCKELKHEKN). A disordered region spans residues 1 to 31 (MGGKEMRNCKELKHEKNGNVTEKVGKNKGKS). Asp342 acts as the Nucleophile in catalysis. Glu395 functions as the Proton donor in the catalytic mechanism.

It belongs to the glycosyl hydrolase 13 family. GlgB subfamily. As to quaternary structure, monomer.

The catalysed reaction is Transfers a segment of a (1-&gt;4)-alpha-D-glucan chain to a primary hydroxy group in a similar glucan chain.. It participates in glycan biosynthesis; glycogen biosynthesis. Functionally, catalyzes the formation of the alpha-1,6-glucosidic linkages in glycogen by scission of a 1,4-alpha-linked oligosaccharide from growing alpha-1,4-glucan chains and the subsequent attachment of the oligosaccharide to the alpha-1,6 position. This chain is 1,4-alpha-glucan branching enzyme GlgB 2 (glgB2), found in Clostridium perfringens (strain 13 / Type A).